Reading from the N-terminus, the 997-residue chain is Autophagy-related protein 9 (997 aa).

Over 1-318 the chain is Cytoplasmic; that stretch reads MERDEYQLPN…DVYNYYLGNG (318 aa). The residue at position 19 (Ser-19) is a Phosphoserine; by ATG1. Residues 29–39 show a composition bias toward polar residues; the sequence is VNPSLNSQEMS. Residues 29-88 are disordered; it reads VNPSLNSQEMSNFPLPDIERGSSLLHSTNDSREDVDENDLRVPESDQGTSTEEEDEVDEE. A compositionally biased stretch (acidic residues) spans 79–88; sequence TEEEDEVDEE. Glycyl lysine isopeptide (Lys-Gly) (interchain with G-Cter in ubiquitin) cross-links involve residues Lys-113 and Lys-121. At Ser-122 the chain carries Phosphoserine. Disordered stretches follow at residues 128 to 159 and 213 to 235; these read VEGSTDDSVPKVGQLSSEEEEDNEFINNDGFD and IHHDKDKSANNGPRNINGNQKHG. Lys-138 participates in a covalent cross-link: Glycyl lysine isopeptide (Lys-Gly) (interchain with G-Cter in ubiquitin). A phosphoserine mark is found at Ser-143 and Ser-144. Positions 144-159 are enriched in acidic residues; it reads SEEEEDNEFINNDGFD. Residues 221–233 show a composition bias toward polar residues; the sequence is ANNGPRNINGNQK. A helical transmembrane segment spans residues 319 to 339; it reads FYCIILEKILNICTLLFVVFV. Topologically, residues 340 to 376 are lumenal; that stretch reads STYMGHCVDYSKLPTSHRVSDIIIDKCYSNSITGFTK. The helical transmembrane segment at 377-397 threads the bilayer; it reads FFLWMFYFFVILKIVQLYFDV. Topologically, residues 398-538 are cytoplasmic; that stretch reads QKLSELQNFY…EELQKRFMLA (141 aa). An intramembrane segment occupies 539 to 559; it reads GFLNIILAPFLVTYFVLLYFF. The Cytoplasmic segment spans residues 560-620; sequence RYFNEYKTSP…DQFPKEKTNL (61 aa). Residues 621–641 traverse the membrane as a helical segment; sequence FLKFVSFICGSFVAILAFLTV. Topologically, residues 642–656 are lumenal; that stretch reads FDPENFLNFEITSDR. Ser-657 is subject to Phosphoserine; by ATG1. Residues 657 to 677 form a helical membrane-spanning segment; sequence SVIFYITILGAIWSVSRNTIT. The Cytoplasmic segment spans residues 678-723; the sequence is QEYHVFDPEETLKELYEYTHYLPKEWEGRYHKEEIKLEFCKLYNLR. Lys-701 participates in a covalent cross-link: Glycyl lysine isopeptide (Lys-Gly) (interchain with G-Cter in ubiquitin). An intramembrane segment occupies 724–744; it reads IVILLRELTSLMITPFVLWFS. Residues 745 to 997 are Cytoplasmic-facing; it reads LPSSAGRIVD…EYYKKSDVGR (253 aa). Phosphoserine is present on residues Ser-787 and Ser-792. Phosphothreonine is present on Thr-794. Position 802 is a phosphoserine; by ATG1 (Ser-802). Phosphothreonine; by ATG1 is present on Thr-804. Ser-831 and Ser-842 each carry phosphoserine; by ATG1. A Phosphoserine modification is found at Ser-864. Phosphoserine; by ATG1 occurs at positions 948 and 969.

It belongs to the ATG9 family. Homotrimer; forms a homotrimer with a central pore that forms a path between the two membrane leaflets. Interacts with ATG23 and ATG27 to form a cycling complex for trafficking to the PAS. Interacts (via N-terminus) with ATG11, required for recruitment of ATG9 to the PAS for the Cvt pathway during nutrient-rich conditions. Interacts (via N-terminus) with ATG17; required for recruitment to the PAS during autophagy and starved conditions. Interacts with ATG2 and ATG18; required for the retrieval of ATG9 from the PAS to the cytoplasmic pool. Interacts with ATG41. Interacts with the conserved oligomeric Golgi (COG) complex subunits COG3 and COG4. Interacts with TRS85. Phosphorylated by ATG1; phosphorylation is required for autophagy and cytoplasm to vacuole transport (Cvt) vesicle formation. Phosphorylation by ATG1 regulates ATG18 interaction and preautophagosome elongation. Phosphorylation at Ser-122 is required for selective autophagy by regulating anterograde trafficking and interaction with ATG23 and ATG27. Phosphorylation at Ser-122 prevents ubiquitination by the SCF(MET30) complex. In terms of processing, ubiquitinated by the SCF(MET30) complex in normal conditions, leading to its degradation by the proteasome, thereby preventing inappropriate induction of autophagy. Ubiquitination by the SCF(MET30) complex is prevented by phosphorylation at Ser-122.

The protein resides in the preautophagosomal structure membrane. It localises to the cytoplasmic vesicle membrane. Its subcellular location is the golgi apparatus membrane. The protein localises to the endoplasmic reticulum membrane. It is found in the mitochondrion membrane. The catalysed reaction is a 1,2-diacyl-sn-glycero-3-phosphocholine(in) = a 1,2-diacyl-sn-glycero-3-phosphocholine(out). The enzyme catalyses a 1,2-diacyl-sn-glycero-3-phospho-L-serine(in) = a 1,2-diacyl-sn-glycero-3-phospho-L-serine(out). It carries out the reaction a 1,2-diacyl-sn-glycero-3-phosphoethanolamine(in) = a 1,2-diacyl-sn-glycero-3-phosphoethanolamine(out). It catalyses the reaction a 1,2-diacyl-sn-glycero-3-phospho-(1D-myo-inositol-3-phosphate)(in) = a 1,2-diacyl-sn-glycero-3-phospho-(1D-myo-inositol-3-phosphate)(out). In terms of biological role, phospholipid scramblase involved in autophagy and cytoplasm to vacuole transport (Cvt) vesicle formation. Cycles between the preautophagosomal structure/phagophore assembly site (PAS) and the cytoplasmic vesicle pool and supplies membrane for the growing autophagosome. Lipid scramblase activity plays a key role in preautophagosomal structure/phagophore assembly by distributing the phospholipids that arrive through ATG2 from the cytoplasmic to the luminal leaflet of the bilayer, thereby driving autophagosomal membrane expansion. Required for mitophagy. Also involved in endoplasmic reticulum-specific autophagic process and is essential for the survival of cells subjected to severe ER stress. Recruits vesicle-tethering proteins TRS85 and YPT1 to the autophagosome formation site. Also recruits ATG23 and ATG8 to the PAS. The protein is Autophagy-related protein 9 of Saccharomyces cerevisiae (strain ATCC 204508 / S288c) (Baker's yeast).